Consider the following 815-residue polypeptide: (-)-kolavenyl diphosphate synthase TPS10, chloroplastic (815 aa).

Residues 1–50 (MFMSSSSSSHARRPQLSSFSYLHPPLPFPGLSFSSTRDKRVNFDSTRIIS) constitute a chloroplast transit peptide. Substrate is bound at residue lysine 247. Mg(2+) is bound by residues aspartate 379 and aspartate 381. The DXDD motif signature appears at 379–382 (DIDD). Lysine 465 is a binding site for substrate.

Belongs to the terpene synthase family. Tpsc subfamily. Mg(2+) serves as cofactor.

It localises to the plastid. The protein localises to the chloroplast. The catalysed reaction is (2E,6E,10E)-geranylgeranyl diphosphate = (-)-kolavenyl diphosphate. Inhibited by high concentrations of magnesium. In terms of biological role, diterpene synthase that catalyzes the formation of (-)-kolavenyl diphosphate from geranylgeranyl diphosphate (GGPP). This is (-)-kolavenyl diphosphate synthase TPS10, chloroplastic from Tripterygium wilfordii (Thunder God vine).